A 182-amino-acid polypeptide reads, in one-letter code: pEARLI1-like lipid transfer protein 2 (182 aa).

A signal peptide spans 1-25 (MASKNSASLALFFALNILFFTLTAG). The span at 33 to 92 (SPKPRPLPNPKVPSPKVPTPSVPSPYVPTPSVPSPSVPTPSVPSPSVPSPNPTPVIPPRT) shows a compositional bias: pro residues. Positions 33–94 (SPKPRPLPNP…TPVIPPRTPG (62 aa)) are disordered. A run of 7 repeats spans residues 42–46 (PKVPS), 47–51 (PKVPT), 52–56 (PSVPS), 62–66 (PSVPS), 67–71 (PSVPT), 72–76 (PSVPS), and 77–81 (PSVPS). Residues 42–81 (PKVPSPKVPTPSVPSPYVPTPSVPSPSVPTPSVPSPSVPS) form a 7 X 5 AA repeats of P-[KS]-V-P-[ST] region.

This sequence belongs to the plant LTP family. PEARLI1 subfamily.

It localises to the secreted. The protein resides in the cell wall. Probable lipid transfer protein (LTP). May improve freezing survival. Seems to control the flowering process and lignin synthesis. Confers resistance to Botrytis cinerea. This Arabidopsis thaliana (Mouse-ear cress) protein is pEARLI1-like lipid transfer protein 2.